Reading from the N-terminus, the 2148-residue chain is General transcription factor 3C polypeptide 1 (2148 aa).

The segment covering 473–487 (GEEAFLSDSESEEES) has biased composition (acidic residues). Disordered regions lie at residues 473–568 (GEEA…FDPH) and 587–609 (NPKE…KPHK). Residues 491–502 (GKRRGRGSRGHS) show a composition bias toward basic residues. Lys-533 participates in a covalent cross-link: Glycyl lysine isopeptide (Lys-Gly) (interchain with G-Cter in SUMO2). Ser-666 is subject to Phosphoserine. Disordered regions lie at residues 717–771 (STAN…EKMG) and 818–863 (TGEQ…SSWE). Composition is skewed to basic and acidic residues over residues 759–770 (ESTRVKKTDEKM) and 825–835 (HSERKTGKQEP). Residues Lys-769 and Lys-832 each participate in a glycyl lysine isopeptide (Lys-Gly) (interchain with G-Cter in SUMO2) cross-link. The residue at position 1062 (Ser-1062) is a Phosphoserine. Residues 1186–1195 (EHFELDREPT) show a composition bias toward basic and acidic residues. 5 disordered regions span residues 1186–1238 (EHFE…KKLR), 1597–1627 (KSLG…SVEV), 1823–1881 (KASG…LPAK), 1893–1928 (SPRP…ESVG), and 2127–2148 (PRPS…ATSR). At Thr-1195 the chain carries Phosphothreonine. Residues 1198 to 1214 (RNRKVRGGKSQKRKRLK) are compositionally biased toward basic residues. Residues 1228–1238 (EHPEAKSKKLR) are compositionally biased toward basic and acidic residues. The span at 1605–1616 (LDDDDEEEDLDE) shows a compositional bias: acidic residues. 3 positions are modified to phosphoserine: Ser-1624, Ser-1853, and Ser-1893. The segment covering 1903 to 1912 (EAQAQFAAPE) has biased composition (low complexity). Residues 2132–2148 (SCYQSSAQPSTGVATSR) show a composition bias toward polar residues.

The protein belongs to the TFIIIC subunit 1 family. As to quaternary structure, part of the TFIIIC subcomplex TFIIIC2, consisting of six subunits, GTF3C1, GTF3C2, GTF3C3, GTF3C4, GTF3C5 and GTF3C6. Interacts with IGHMBP2. Interacts with MAF1.

The protein localises to the nucleus. Its function is as follows. Required for RNA polymerase III-mediated transcription. Component of TFIIIC that initiates transcription complex assembly on tRNA and is required for transcription of 5S rRNA and other stable nuclear and cytoplasmic RNAs. Binds to the box B promoter element. The chain is General transcription factor 3C polypeptide 1 (Gtf3c1) from Rattus norvegicus (Rat).